A 241-amino-acid chain; its full sequence is MKILILACLVALALAREKEELNVSSETVESLSSNEPDSSSEESITHINKEKLQKFKHEGQQQREVERQDKISRFVQPQPVVYPYAEPVPYAVVPQSILPLAQPPILPFLQPEIMEVSQAKETILPKRKVMPFLKSPIVPFSERQILNPTNGENLRLPVHLIQPFMHQVPQSLLQTLMLPSQPVLSPPQSKVAPFPQPVVPYPQRDTPVQAFLLYQDPRLGPTGELDPATQPIVAVHNPVIV.

A signal peptide spans 1–15; that stretch reads MKILILACLVALALA. The segment at 21 to 45 is disordered; it reads LNVSSETVESLSSNEPDSSSEESIT. S24 is subject to Phosphoserine; in form 4-P, form 5-P, form 6-P and form 7-P. S25 bears the Phosphoserine; in form 7-P mark. T27 carries the phosphothreonine; in form 6-P and form 7-P modification. Residues S30 and S32 each carry the phosphoserine modification. S33 carries the post-translational modification Phosphoserine; in form 5-P, form 6-P and form 7-P. Phosphoserine; in form 4-P, form 5-P, form 6-P and form 7-P occurs at positions 38, 39, and 40. N150 is subject to Deamidated asparagine.

Belongs to the beta-casein family. There are at least five different forms found in milk, with varying degrees of phosphorylation. These include form 3-P which is phosphorylated at three sites that have not been determined, this form is present in very low amounts, form 4-P which is phosphorylated at four sites, form 5-P which is phosphorylated at five sites, form 6-P which is phosphorylated at six sites, and form 7-P which is phosphorylated at seven sites. In terms of processing, spontaneous deamidation of Asn-150 produces aspartate or isoaspartate. As to expression, mammary gland specific. Secreted in milk.

The protein resides in the secreted. Its function is as follows. Important role in determination of the surface properties of the casein micelles. This chain is Beta-casein, found in Equus caballus (Horse).